A 695-amino-acid polypeptide reads, in one-letter code: Biosynthetic arginine decarboxylase 1 (695 aa).

At lysine 141 the chain carries N6-(pyridoxal phosphate)lysine. 332–342 (LDVGGGLGVDY) contributes to the substrate binding site.

It belongs to the Orn/Lys/Arg decarboxylase class-II family. SpeA subfamily. Requires Mg(2+) as cofactor. It depends on pyridoxal 5'-phosphate as a cofactor.

It catalyses the reaction L-arginine + H(+) = agmatine + CO2. Functionally, catalyzes the biosynthesis of agmatine from arginine. In Synechocystis sp. (strain ATCC 27184 / PCC 6803 / Kazusa), this protein is Biosynthetic arginine decarboxylase 1 (speA1).